A 262-amino-acid chain; its full sequence is Acyl-[acyl-carrier-protein]--UDP-N-acetylglucosamine O-acyltransferase (262 aa).

The protein belongs to the transferase hexapeptide repeat family. LpxA subfamily. In terms of assembly, homotrimer.

The protein localises to the cytoplasm. The enzyme catalyses a (3R)-hydroxyacyl-[ACP] + UDP-N-acetyl-alpha-D-glucosamine = a UDP-3-O-[(3R)-3-hydroxyacyl]-N-acetyl-alpha-D-glucosamine + holo-[ACP]. Its pathway is glycolipid biosynthesis; lipid IV(A) biosynthesis; lipid IV(A) from (3R)-3-hydroxytetradecanoyl-[acyl-carrier-protein] and UDP-N-acetyl-alpha-D-glucosamine: step 1/6. Involved in the biosynthesis of lipid A, a phosphorylated glycolipid that anchors the lipopolysaccharide to the outer membrane of the cell. This is Acyl-[acyl-carrier-protein]--UDP-N-acetylglucosamine O-acyltransferase from Aliivibrio fischeri (strain ATCC 700601 / ES114) (Vibrio fischeri).